A 96-amino-acid polypeptide reads, in one-letter code: Protein Vpr (96 aa).

The homooligomerization stretch occupies residues 1–42; the sequence is MEQAPEDQGPQREPYHEWTLELLEELKNEAVRHFPRPWLHGL. Phosphoserine; by host is present on residues Ser-79, Ser-94, and Ser-96.

The protein belongs to the HIV-1 VPR protein family. In terms of assembly, homooligomer, may form homodimer. Interacts with p6-gag region of the Pr55 Gag precursor protein through a (Leu-X-X)4 motif near the C-terminus of the P6gag protein. Interacts with host UNG. May interact with host RAD23A/HHR23A. Interacts with host VPRBP/DCAF1, leading to hijack the CUL4A-RBX1-DDB1-DCAF1/VPRBP complex, mediating ubiquitination of host proteins such as TERT and ZGPAT and arrest of the cell cycle in G2 phase. In terms of processing, phosphorylated on several residues by host. These phosphorylations regulate VPR activity for the nuclear import of the HIV-1 pre-integration complex.

The protein resides in the virion. It localises to the host nucleus. The protein localises to the host extracellular space. In terms of biological role, during virus replication, may deplete host UNG protein, and incude G2-M cell cycle arrest. Acts by targeting specific host proteins for degradation by the 26S proteasome, through association with the cellular CUL4A-DDB1 E3 ligase complex by direct interaction with host VPRPB/DCAF-1. Cell cycle arrest reportedly occurs within hours of infection and is not blocked by antiviral agents, suggesting that it is initiated by the VPR carried into the virion. Additionally, VPR induces apoptosis in a cell cycle dependent manner suggesting that these two effects are mechanistically linked. Detected in the serum and cerebrospinal fluid of AIDS patient, VPR may also induce cell death to bystander cells. During virus entry, plays a role in the transport of the viral pre-integration (PIC) complex to the host nucleus. This function is crucial for viral infection of non-dividing macrophages. May act directly at the nuclear pore complex, by binding nucleoporins phenylalanine-glycine (FG)-repeat regions. The chain is Protein Vpr from Homo sapiens (Human).